A 279-amino-acid chain; its full sequence is Proteasome subunit beta 2 (279 aa).

Residues 1-53 (MAAAFDPSGRFPDLFTSVGTSSFSAFLSKAAPELLPGRRPLPPGMATGLTPHA) constitute a propeptide, removed in mature form; by autocatalysis. Catalysis depends on Thr-54, which acts as the Nucleophile.

This sequence belongs to the peptidase T1B family. The 20S proteasome core is composed of 14 alpha and 14 beta subunits that assemble into four stacked heptameric rings, resulting in a barrel-shaped structure. The two inner rings, each composed of seven catalytic beta subunits, are sandwiched by two outer rings, each composed of seven alpha subunits. The catalytic chamber with the active sites is on the inside of the barrel. Has a gated structure, the ends of the cylinder being occluded by the N-termini of the alpha-subunits. Is capped by the proteasome-associated ATPase, ARC.

The protein resides in the cytoplasm. It carries out the reaction Cleavage of peptide bonds with very broad specificity.. Its pathway is protein degradation; proteasomal Pup-dependent pathway. The formation of the proteasomal ATPase ARC-20S proteasome complex, likely via the docking of the C-termini of ARC into the intersubunit pockets in the alpha-rings, may trigger opening of the gate for substrate entry. Interconversion between the open-gate and close-gate conformations leads to a dynamic regulation of the 20S proteasome proteolysis activity. Component of the proteasome core, a large protease complex with broad specificity involved in protein degradation. The protein is Proteasome subunit beta 2 of Salinispora tropica (strain ATCC BAA-916 / DSM 44818 / JCM 13857 / NBRC 105044 / CNB-440).